The primary structure comprises 316 residues: ATP synthase gamma chain (316 aa).

The protein belongs to the ATPase gamma chain family. As to quaternary structure, F-type ATPases have 2 components, CF(1) - the catalytic core - and CF(0) - the membrane proton channel. CF(1) has five subunits: alpha(3), beta(3), gamma(1), delta(1), epsilon(1). CF(0) has three main subunits: a, b and c.

The protein localises to the cellular thylakoid membrane. Produces ATP from ADP in the presence of a proton gradient across the membrane. The gamma chain is believed to be important in regulating ATPase activity and the flow of protons through the CF(0) complex. This is ATP synthase gamma chain from Prochlorococcus marinus (strain SARG / CCMP1375 / SS120).